An 89-amino-acid polypeptide reads, in one-letter code: Alpha-latrotoxin associated low molecular weight protein SGV242-280 (89 aa).

The N-terminal stretch at 1-18 (MSKLHFLILLSVIVSVFC) is a signal peptide.

The protein belongs to the arthropod CHH/MIH/GIH/VIH hormone family. Expressed by the venom gland.

It is found in the secreted. May increase the toxicity of alpha-latrotoxin and/or other venom components. Is non-toxic to mice and to the cockroach Periplaneta americana. The polypeptide is Alpha-latrotoxin associated low molecular weight protein SGV242-280 (Steatoda grossa (False black widow)).